Reading from the N-terminus, the 344-residue chain is Methylthioribose-1-phosphate isomerase (344 aa).

Residues 55–57 (RGA), arginine 98, and glutamine 202 contribute to the substrate site. Aspartate 243 acts as the Proton donor in catalysis. Position 253–254 (253–254 (NK)) interacts with substrate.

Belongs to the eIF-2B alpha/beta/delta subunits family. MtnA subfamily.

The enzyme catalyses 5-(methylsulfanyl)-alpha-D-ribose 1-phosphate = 5-(methylsulfanyl)-D-ribulose 1-phosphate. The protein operates within amino-acid biosynthesis; L-methionine biosynthesis via salvage pathway; L-methionine from S-methyl-5-thio-alpha-D-ribose 1-phosphate: step 1/6. In terms of biological role, catalyzes the interconversion of methylthioribose-1-phosphate (MTR-1-P) into methylthioribulose-1-phosphate (MTRu-1-P). The chain is Methylthioribose-1-phosphate isomerase from Gemmatimonas aurantiaca (strain DSM 14586 / JCM 11422 / NBRC 100505 / T-27).